The sequence spans 1391 residues: Nuclear pore complex protein Nup155 (1391 aa).

A glycan (O-linked (GlcNAc) serine) is linked at Ser-526. Disordered regions lie at residues 604–630 (SSSPVPSGSPYPNPSSLGTPSHGAQPP) and 985–1012 (QSKAAPQSPSVPKKPGPPVLSSDPNMLS). Phosphoserine is present on Ser-1057.

Belongs to the non-repetitive/WGA-negative nucleoporin family. As to quaternary structure, interacts with GLE1 and NUP35/NUP53. Able to form a heterotrimer with GLE1 and NUP42 in vitro. Forms a complex with NUP35, NUP93, NUP205 and lamin B. Phosphorylated. Phosphorylation and dephosphorylation may be important for the function of NUP155 and may play a role in the reversible disassembly of the nuclear pore complex during mitosis. Post-translationally, disulfide-linked to NUP62. The inner channel of the NPC has a different redox environment from the cytoplasm and allows the formation of interchain disulfide bonds between some nucleoporins, the significant increase of these linkages upon oxidative stress reduces the permeability of the NPC.

It localises to the nucleus. Its subcellular location is the nuclear pore complex. The protein localises to the nucleus membrane. Essential component of nuclear pore complex. Could be essessential for embryogenesis. Nucleoporins may be involved both in binding and translocating proteins during nucleocytoplasmic transport. The protein is Nuclear pore complex protein Nup155 (Nup155) of Mus musculus (Mouse).